A 31-amino-acid polypeptide reads, in one-letter code: Cyclotide psybry A (31 aa).

Residues 1–31 (GFNPCGETCIWFPTCHAPGCTCSIANICVRN) constitute a cross-link (cyclopeptide (Gly-Asn)). Disulfide bonds link Cys-5/Cys-20, Cys-9/Cys-22, and Cys-15/Cys-28.

Post-translationally, this is a cyclic peptide.

Probably participates in a plant defense mechanism. The protein is Cyclotide psybry A of Psychotria brachyceras.